The chain runs to 478 residues: ATP synthase subunit beta (478 aa).

151-158 (GGAGVGKT) provides a ligand contact to ATP.

It belongs to the ATPase alpha/beta chains family. In terms of assembly, F-type ATPases have 2 components, CF(1) - the catalytic core - and CF(0) - the membrane proton channel. CF(1) has five subunits: alpha(3), beta(3), gamma(1), delta(1), epsilon(1). CF(0) has three main subunits: a(1), b(2) and c(9-12). The alpha and beta chains form an alternating ring which encloses part of the gamma chain. CF(1) is attached to CF(0) by a central stalk formed by the gamma and epsilon chains, while a peripheral stalk is formed by the delta and b chains.

The protein resides in the cell inner membrane. The enzyme catalyses ATP + H2O + 4 H(+)(in) = ADP + phosphate + 5 H(+)(out). Its function is as follows. Produces ATP from ADP in the presence of a proton gradient across the membrane. The catalytic sites are hosted primarily by the beta subunits. This chain is ATP synthase subunit beta, found in Xanthobacter autotrophicus (strain ATCC BAA-1158 / Py2).